The chain runs to 318 residues: Peroxisomal and mitochondrial division factor 1 (318 aa).

Residues 1 to 39 (MADVEDRAAKGISDYDQGGVKTTELERKIEDMENKNQEL) are disordered. The Cytoplasmic segment spans residues 1–291 (MADVEDRAAK…QKGSLEAEYQ (291 aa)). The stretch at 19–260 (GVKTTELERK…KKVEEGNKTV (242 aa)) forms a coiled coil. Over residues 23–39 (TELERKIEDMENKNQEL) the composition is skewed to basic and acidic residues. A helical transmembrane segment spans residues 292-312 (WPVVAAGSVGAAGLVAATFFV). Residues 313–318 (CYSKLR) are Mitochondrial intermembrane-facing.

In terms of assembly, homodimer. Interacts with PMD2.

It is found in the peroxisome membrane. The protein localises to the mitochondrion outer membrane. Its function is as follows. Involved in morphogenesis and proliferation of peroxisomes and mitochondria, independently from the previously defined pathway controlled by the FIS1-DRP3 complex. This is Peroxisomal and mitochondrial division factor 1 from Arabidopsis thaliana (Mouse-ear cress).